The following is a 1125-amino-acid chain: MKTSKDSSNSNSNNNNNNNNNNNNNNNNNNGLNGTYSSKSLSPPTSPKQMSGNSIISNSTGNLSSGSGSGSSSGGNKKFINRSFNTFIDFIKKPARRNSKAHNTPPPYPEVDTGFGYFLELDSKPPKPFDEKDDPIHNSTGSTDSWEGDLNSSGGGGKQPQQTQQQSSGENLNNSSDRNNNSNENNQIVDDNSNVFNKGVVVQTVPMTEIGLFPVSLMMAQQRAEHPINVEDIESDVQTCSIPNSKPLYSSLGCSTNSSNSGSSISAPNITFQSFGISPVNNNNNNNNNSNNNSNSNSNSNSNSNNNNNNNNNNNNNNNNNNNNNNNNNSTVNSNNSSLNNSPRYLNSSSSPRSMQHLSSKITTTTTTTTTTTTTTSDDNNGNTNNNISNNNNIINNSNNNSNSNNNNNNNINNTNHKFKTMEKYFSSKENFPIPFPKLKDELGVIIENSSNKGYVGGNKGSEDRRKKIEQKKKQVPAPEMKATKEKFIETITDPTTLNSFRSFMENTQSNENLEFFLEVKRFNTIQDQVLLKHTCDDIWRRFFDDLAVTQLCVESSLKKLINNRRENPTHSMFNEVLDLLLDDIVCDAFRNYISSPFNPEWKSEFKKKFTNNTYSTTTQPINNFNNTNNNNNNNCSTPPNNYSSSPIKQSNINNNNNNASSSNIASSSNVNNNNNNSNGSNTSSSHHRERLDNIKGNRERVDSNGKERSIDNKDILSLLESNLSNHSNSSSNSNGKDKDKDKDKNENTTDNSNNNNNSNNNLNNLIIKNNFNNILQSPQIVSKINEIFKDSNNSQLSISITLDNDEDPTIFHLDESDMESLIEEVVKDNISVHTEISYSDVSIHKWIASGSSGRVYNGQYKGKDVAIKVLGPEVCVHFDLNEFKREVALMSIFKHDNLARCLGAGQYDDKYFHLTEYCHNGSLFSYLRDQRNNISFGQRLHFALGIARGMRYLHSMSIIHRDLKSMNILLTKRLKIKIVDFGTSRVANKYNMTTHVGTQAWMAPEIFTSRTYTNKVDVYSYAIILFEIFTRKSAYDENANINIPNMVMKGERPELPKDMQTSISNIIKKCWQQKPSNRPSFIKIVAYLESIIYPSVSNSLGLVASTSFSSSALWSGQILAQPKN.

Disordered stretches follow at residues 1–77, 96–191, 276–416, and 455–480; these read MKTS…GGNK, RRNS…IVDD, GISP…NNTN, and YVGG…PAPE. Composition is skewed to low complexity over residues 7-30 and 37-66; these read SSNS…NNNN and SSKS…LSSG. The segment covering 121-136 has biased composition (basic and acidic residues); the sequence is LDSKPPKPFDEKDDPI. Composition is skewed to low complexity over residues 159-191 and 281-342; these read QPQQ…IVDD and NNNN…LNNS. The segment covering 343 to 361 has biased composition (polar residues); the sequence is PRYLNSSSSPRSMQHLSSK. Residues 362 to 416 show a composition bias toward low complexity; sequence ITTTTTTTTTTTTTTSDDNNGNTNNNISNNNNIINNSNNNSNSNNNNNNNINNTN. In terms of domain architecture, RGS spans 487–603; it reads KFIETITDPT…ISSPFNPEWK (117 aa). Over residues 617-685 the composition is skewed to low complexity; that stretch reads TTTQPINNFN…NNSNGSNTSS (69 aa). Disordered stretches follow at residues 617-710 and 723-762; these read TTTQ…KERS and NLSN…SNNN. Basic and acidic residues predominate over residues 690-710; sequence ERLDNIKGNRERVDSNGKERS. Residues 723–735 show a composition bias toward low complexity; that stretch reads NLSNHSNSSSNSN. Over residues 736-748 the composition is skewed to basic and acidic residues; that stretch reads GKDKDKDKDKNEN. The span at 749–762 shows a compositional bias: low complexity; that stretch reads TTDNSNNNNNSNNN. One can recognise a Protein kinase domain in the interval 842-1097; it reads VSIHKWIASG…YLESIIYPSV (256 aa). Residues 848–856 and lysine 869 each bind ATP; that span reads IASGSSGRV. Aspartate 963 serves as the catalytic Proton acceptor.

The protein belongs to the protein kinase superfamily. TKL Ser/Thr protein kinase family. Autophosphorylated.

The protein resides in the cytoplasm. Its subcellular location is the cell membrane. It carries out the reaction L-seryl-[protein] + ATP = O-phospho-L-seryl-[protein] + ADP + H(+). The enzyme catalyses L-threonyl-[protein] + ATP = O-phospho-L-threonyl-[protein] + ADP + H(+). With respect to regulation, up-regulated by cAMP. Its function is as follows. Serine/threonine kinase involved in negative regulation of chemotaxis. The polypeptide is RGS domain-containing serine/threonine-protein kinase A (rckA) (Dictyostelium discoideum (Social amoeba)).